The following is a 210-amino-acid chain: Glutathione S-transferase P 1 (210 aa).

The GST N-terminal domain maps to 1-80 (PEYTIIYFNA…LLARNHDLYG (80 aa)). Glutathione contacts are provided by residues Tyr-7, Arg-13, Trp-38, Lys-44, 51–52 (QL), and 64–65 (QS). One can recognise a GST C-terminal domain in the interval 82–203 (NPREASLIDM…SSDAHKKRPI (122 aa)).

It belongs to the GST superfamily. Pi family. As to quaternary structure, homodimer.

It is found in the cytoplasm. The protein resides in the mitochondrion. Its subcellular location is the nucleus. It catalyses the reaction RX + glutathione = an S-substituted glutathione + a halide anion + H(+). Functionally, conjugation of reduced glutathione to a wide number of exogenous and endogenous hydrophobic electrophiles. The chain is Glutathione S-transferase P 1 from Bufo bufo (European toad).